The sequence spans 400 residues: Elongation factor Tu 1 (400 aa).

The tr-type G domain maps to 10-209 (KPHLNIGTIG…AVDSYIPLPQ (200 aa)). The interval 19–26 (GHIDHGKT) is G1. 19–26 (GHIDHGKT) serves as a coordination point for GTP. T26 serves as a coordination point for Mg(2+). The tract at residues 60–64 (GITIN) is G2. The tract at residues 81–84 (DCPG) is G3. GTP contacts are provided by residues 81-85 (DCPGH) and 136-139 (NKTD). The tract at residues 136-139 (NKTD) is G4. The segment at 174 to 176 (SAL) is G5.

Belongs to the TRAFAC class translation factor GTPase superfamily. Classic translation factor GTPase family. EF-Tu/EF-1A subfamily. Monomer.

The protein localises to the cytoplasm. It carries out the reaction GTP + H2O = GDP + phosphate + H(+). Its function is as follows. GTP hydrolase that promotes the GTP-dependent binding of aminoacyl-tRNA to the A-site of ribosomes during protein biosynthesis. The polypeptide is Elongation factor Tu 1 (Syntrophomonas wolfei subsp. wolfei (strain DSM 2245B / Goettingen)).